Here is a 150-residue protein sequence, read N- to C-terminus: Small ribosomal subunit protein uS13 (150 aa).

The disordered stretch occupies residues 131–150 (QRTKSTFRRGPTVGVSRRKK).

The protein belongs to the universal ribosomal protein uS13 family. In terms of assembly, part of the 30S ribosomal subunit. Forms a loose heterodimer with protein S19. Forms two bridges to the 50S subunit in the 70S ribosome.

Functionally, located at the top of the head of the 30S subunit, it contacts several helices of the 16S rRNA. In the 70S ribosome it contacts the 23S rRNA (bridge B1a) and protein L5 of the 50S subunit (bridge B1b), connecting the 2 subunits; these bridges are implicated in subunit movement. This is Small ribosomal subunit protein uS13 from Methanocaldococcus jannaschii (strain ATCC 43067 / DSM 2661 / JAL-1 / JCM 10045 / NBRC 100440) (Methanococcus jannaschii).